The chain runs to 259 residues: Dihydroorotate dehydrogenase B (NAD(+)), electron transfer subunit (259 aa).

The FAD-binding FR-type domain occupies 2 to 102 (MQKQNMIVVN…LGPLGHGFPV (101 aa)). FAD-binding positions include 53-56 (RPIS), 70-72 (LYR), and 77-78 (GT). [2Fe-2S] cluster contacts are provided by Cys-221, Cys-226, Cys-229, and Cys-246.

The protein belongs to the PyrK family. In terms of assembly, heterotetramer of 2 PyrK and 2 PyrD type B subunits. [2Fe-2S] cluster is required as a cofactor. Requires FAD as cofactor.

It participates in pyrimidine metabolism; UMP biosynthesis via de novo pathway; orotate from (S)-dihydroorotate (NAD(+) route): step 1/1. Responsible for channeling the electrons from the oxidation of dihydroorotate from the FMN redox center in the PyrD type B subunit to the ultimate electron acceptor NAD(+). The protein is Dihydroorotate dehydrogenase B (NAD(+)), electron transfer subunit of Bacillus cereus (strain ATCC 14579 / DSM 31 / CCUG 7414 / JCM 2152 / NBRC 15305 / NCIMB 9373 / NCTC 2599 / NRRL B-3711).